The primary structure comprises 36 residues: Photosystem I reaction center subunit VIII (36 aa).

The helical transmembrane segment at 6–28 (LPSIFVPXVGLVFPAIAMASXFL) threads the bilayer.

Belongs to the PsaI family.

The protein localises to the plastid. It is found in the chloroplast thylakoid membrane. In terms of biological role, may help in the organization of the PsaL subunit. The chain is Photosystem I reaction center subunit VIII from Acorus gramineus (Dwarf sweet flag).